A 148-amino-acid chain; its full sequence is Large ribosomal subunit protein bL9 (148 aa).

This sequence belongs to the bacterial ribosomal protein bL9 family.

Its function is as follows. Binds to the 23S rRNA. The sequence is that of Large ribosomal subunit protein bL9 from Clostridium beijerinckii (strain ATCC 51743 / NCIMB 8052) (Clostridium acetobutylicum).